Consider the following 101-residue polypeptide: Small ribosomal subunit protein uS14 (101 aa).

It belongs to the universal ribosomal protein uS14 family. In terms of assembly, part of the 30S ribosomal subunit. Contacts proteins S3 and S10.

Functionally, binds 16S rRNA, required for the assembly of 30S particles and may also be responsible for determining the conformation of the 16S rRNA at the A site. This is Small ribosomal subunit protein uS14 from Pseudomonas putida (strain GB-1).